Consider the following 261-residue polypeptide: Snake venom serine protease (261 aa).

A signal peptide spans 1 to 20 (MALIGVLANLLILCLSYART). The propeptide occupies 21 to 24 (APDR). The Peptidase S1 domain occupies 25–249 (IIGGLECNQN…YIDWIQDIMA (225 aa)). Intrachain disulfides connect cysteine 31–cysteine 163, cysteine 50–cysteine 66, cysteine 98–cysteine 256, cysteine 142–cysteine 210, cysteine 174–cysteine 189, and cysteine 200–cysteine 225. Histidine 65 acts as the Charge relay system in catalysis. A glycan (N-linked (GlcNAc...) asparagine) is linked at asparagine 103. The active-site Charge relay system is aspartate 110. 2 N-linked (GlcNAc...) asparagine glycosylation sites follow: asparagine 117 and asparagine 121. The Charge relay system role is filled by serine 204.

This sequence belongs to the peptidase S1 family. Snake venom subfamily. In terms of assembly, monomer. In terms of tissue distribution, expressed by the venom gland.

Its subcellular location is the secreted. In terms of biological role, snake venom serine protease that may act in the hemostasis system of the prey. The protein is Snake venom serine protease of Philodryas olfersii (Green snake).